Consider the following 194-residue polypeptide: Imidazoleglycerol-phosphate dehydratase (194 aa).

The protein belongs to the imidazoleglycerol-phosphate dehydratase family.

The protein resides in the cytoplasm. It carries out the reaction D-erythro-1-(imidazol-4-yl)glycerol 3-phosphate = 3-(imidazol-4-yl)-2-oxopropyl phosphate + H2O. Its pathway is amino-acid biosynthesis; L-histidine biosynthesis; L-histidine from 5-phospho-alpha-D-ribose 1-diphosphate: step 6/9. The sequence is that of Imidazoleglycerol-phosphate dehydratase from Halalkalibacterium halodurans (strain ATCC BAA-125 / DSM 18197 / FERM 7344 / JCM 9153 / C-125) (Bacillus halodurans).